The following is a 247-amino-acid chain: Small ribosomal subunit protein uS3 (247 aa).

Positions 18-87 (IDEYLAKRFY…NPQITVRRVE (70 aa)) constitute a KH type-2 domain. Residues 226 to 247 (QQGEVVGEAPNTPLEEQGQKQG) form a disordered region.

It belongs to the universal ribosomal protein uS3 family. In terms of assembly, part of the 30S ribosomal subunit.

Its function is as follows. Binds the lower part of the 30S subunit head. The chain is Small ribosomal subunit protein uS3 from Hyperthermus butylicus (strain DSM 5456 / JCM 9403 / PLM1-5).